The sequence spans 195 residues: MINLLVIISAYFIGNFSTSFIVGKLTSNIDIRQHGSGNAGSTNVLRTLGVKAAALTFLGDTLKGMLSFYLAQRFVGEQAALMAGIAVVIGHNWPVLLGFKGGKGIATTIGVALIASPLAAIASISLGVVILYRYKYVSLSSITAMTILPFFLFSYGLEYFIFGLVLSVMAIYRHRENIKRLRTGTEKKIGRKTSV.

A run of 4 helical transmembrane segments spans residues I2–V22, A79–F99, V111–L131, and T146–L166.

The protein belongs to the PlsY family. As to quaternary structure, probably interacts with PlsX.

The protein resides in the cell membrane. It catalyses the reaction an acyl phosphate + sn-glycerol 3-phosphate = a 1-acyl-sn-glycero-3-phosphate + phosphate. Its pathway is lipid metabolism; phospholipid metabolism. In terms of biological role, catalyzes the transfer of an acyl group from acyl-phosphate (acyl-PO(4)) to glycerol-3-phosphate (G3P) to form lysophosphatidic acid (LPA). This enzyme utilizes acyl-phosphate as fatty acyl donor, but not acyl-CoA or acyl-ACP. This is Glycerol-3-phosphate acyltransferase from Alkaliphilus metalliredigens (strain QYMF).